Reading from the N-terminus, the 629-residue chain is 5-aminolevulinate synthase, mitochondrial (629 aa).

The N-terminal 69 residues, 1-69 (MDSVLRQSKA…VQSARTGGRA (69 aa)), are a transit peptide targeting the mitochondrion. Substrate is bound by residues Arg155, Ser268, and Lys287. Residues Ser320, His348, and Thr388 each coordinate pyridoxal 5'-phosphate. The active site involves Lys391. Lys391 bears the N6-(pyridoxal phosphate)lysine mark. Pyridoxal 5'-phosphate-binding residues include Thr420 and Thr421. Thr506 contributes to the substrate binding site.

The protein belongs to the class-II pyridoxal-phosphate-dependent aminotransferase family. In terms of assembly, homodimer. Pyridoxal 5'-phosphate is required as a cofactor.

Its subcellular location is the mitochondrion matrix. The enzyme catalyses succinyl-CoA + glycine + H(+) = 5-aminolevulinate + CO2 + CoA. The protein operates within porphyrin-containing compound metabolism; protoporphyrin-IX biosynthesis; 5-aminolevulinate from glycine: step 1/1. Its function is as follows. Catalyzes the synthesis of 5-aminolevulinate (ALA) from succinyl-CoA and glycine, the first and rate-limiting step in heme biosynthesis. This is 5-aminolevulinate synthase, mitochondrial (alv-1) from Neurospora crassa (strain ATCC 24698 / 74-OR23-1A / CBS 708.71 / DSM 1257 / FGSC 987).